Here is a 118-residue protein sequence, read N- to C-terminus: GRB2-related adapter protein-like (118 aa).

Residues 1–58 form the SH3 domain; sequence MESVALYSFQATESDELAFNKGDTLKILNMEDDQNWYKAELRGVEGFIPKNYIRVKPH. Residues 60 to 118 form the SH2 domain; the sequence is WYSGRISRQLAEEILMKRNHLGAFLIRESESSPGEFSVSVNNRAQRGPCLGPKSHSRLG. Residues 89–118 are disordered; that stretch reads ESSPGEFSVSVNNRAQRGPCLGPKSHSRLG. Polar residues predominate over residues 90-103; the sequence is SSPGEFSVSVNNRA.

Belongs to the GRB2/sem-5/DRK family.

This Homo sapiens (Human) protein is GRB2-related adapter protein-like (GRAPL).